The chain runs to 400 residues: S-adenosylmethionine synthase (400 aa).

136–141 (GTGSTD) contributes to the ATP binding site.

It belongs to the AdoMet synthase 2 family. The cofactor is Mg(2+).

It catalyses the reaction L-methionine + ATP + H2O = S-adenosyl-L-methionine + phosphate + diphosphate. It participates in amino-acid biosynthesis; S-adenosyl-L-methionine biosynthesis; S-adenosyl-L-methionine from L-methionine: step 1/1. In terms of biological role, catalyzes the formation of S-adenosylmethionine from methionine and ATP. This chain is S-adenosylmethionine synthase, found in Methanospirillum hungatei JF-1 (strain ATCC 27890 / DSM 864 / NBRC 100397 / JF-1).